The following is a 156-amino-acid chain: Small ribosomal subunit protein uS7 (156 aa).

The protein belongs to the universal ribosomal protein uS7 family. Part of the 30S ribosomal subunit. Contacts proteins S9 and S11.

In terms of biological role, one of the primary rRNA binding proteins, it binds directly to 16S rRNA where it nucleates assembly of the head domain of the 30S subunit. Is located at the subunit interface close to the decoding center, probably blocks exit of the E-site tRNA. In Shewanella piezotolerans (strain WP3 / JCM 13877), this protein is Small ribosomal subunit protein uS7.